The following is a 444-amino-acid chain: uncharacterized protein (444 aa).

In terms of domain architecture, Radical SAM core spans 164–381; that stretch reads GAYGKSFLLE…EKALKKEGIR (218 aa). The [4Fe-4S] cluster site is built by Cys178, Cys182, and Cys185.

Requires [4Fe-4S] cluster as cofactor.

This is an uncharacterized protein from Methanocaldococcus jannaschii (strain ATCC 43067 / DSM 2661 / JAL-1 / JCM 10045 / NBRC 100440) (Methanococcus jannaschii).